The following is a 344-amino-acid chain: Flavonoid 7-O-methyltransferase 1B (344 aa).

Asp-211 serves as a coordination point for S-adenosyl-L-methionine. Catalysis depends on His-249, which acts as the Proton acceptor.

It belongs to the class I-like SAM-binding methyltransferase superfamily. Cation-independent O-methyltransferase family. As to quaternary structure, homodimer.

The catalysed reaction is scutellarein + S-adenosyl-L-methionine = scutellarein 7-methyl ether + S-adenosyl-L-homocysteine. It carries out the reaction 4',7,8-trihydroxyflavone + S-adenosyl-L-methionine = 4',8-dihydroxy-7-methoxyflavone + S-adenosyl-L-homocysteine. The enzyme catalyses isorhamnetin + S-adenosyl-L-methionine = rhamnacene + S-adenosyl-L-homocysteine + H(+). It catalyses the reaction kaempferol + S-adenosyl-L-methionine = kaempferol 7-methyl ether + S-adenosyl-L-homocysteine + H(+). The catalysed reaction is (2S)-naringenin + S-adenosyl-L-methionine = (2S)-sakuranetin + S-adenosyl-L-homocysteine + H(+). It carries out the reaction quercetin + S-adenosyl-L-methionine = rhamnetin + S-adenosyl-L-homocysteine + H(+). The enzyme catalyses apigenin + S-adenosyl-L-methionine = genkwanin + S-adenosyl-L-homocysteine + H(+). It catalyses the reaction luteolin + S-adenosyl-L-methionine = luteolin 7-methyl ether + S-adenosyl-L-homocysteine + H(+). Its pathway is flavonoid metabolism. Flavonoid 7-O-methyltransferase involved in the biosynthesis of polymethoxylated flavonoids natural products such as pebrellin, aroma compounds which contribute to the flavor of peppermint, and exhibit pharmacological activities such as anti-allergic, anti-oxidant, antibacterial, anti-proliferative, and anti-inflammatory effects. Catalyzes S-adenosylmethionine-dependent regioselective 7-O-methylation of flavonoids; active on various hydroxylated flavonoid substrates, including luteolin (LUT), quercetin, kaempferol, isorhamnetin, apigenin (API), scutellarein (6-hydroxy-apigenin, 6-OH-API, SCU), 7,8,4'-trihydroxy-flavone and naringenin (NAR), and, with a lower efficiency, 7,8,3',4'-tetrahydroxy-flavone, taxifolin and hesperetin. The protein is Flavonoid 7-O-methyltransferase 1B of Mentha piperita (Peppermint).